Reading from the N-terminus, the 532-residue chain is FRIGIDA-like protein 4a (532 aa).

The interval 406 to 432 (KTEKRKPAAVPANKRTRASYNGPMPPA) is disordered.

This sequence belongs to the Frigida family. In terms of tissue distribution, expressed in leaves, shoot apex, flowers and during seed development.

This chain is FRIGIDA-like protein 4a (FRL4A), found in Arabidopsis thaliana (Mouse-ear cress).